A 282-amino-acid polypeptide reads, in one-letter code: MSNFSMETLKLLRQQTGVGLTKCKEALAECNGNLEEAVVYLRKLGLASASKKEHRETKEGVIAAKSDARGTAIVEVNVETDFVANNAVFRSFVDGLVEDVLNHKADNVDALLQLPSFQDASLTVDELRAVTMQTVGENIRISRIKYFPKTTEESVGIYSHGNGKAVSITILSGLSDQESLAKDISMHIVAAQPLFLSKESVPEDALAKEKEIISSQIQGKPQAVIDKIISGKLGTFFQDVCLLEQAYIKNPDTTIQHLINGVSKTSGNSVEVKEFILWKIGA.

The tract at residues 80 to 83 (TDFV) is involved in Mg(2+) ion dislocation from EF-Tu.

This sequence belongs to the EF-Ts family.

It is found in the cytoplasm. In terms of biological role, associates with the EF-Tu.GDP complex and induces the exchange of GDP to GTP. It remains bound to the aminoacyl-tRNA.EF-Tu.GTP complex up to the GTP hydrolysis stage on the ribosome. The chain is Elongation factor Ts from Chlamydia felis (strain Fe/C-56) (Chlamydophila felis).